Consider the following 332-residue polypeptide: Melanocortin receptor 4 (332 aa).

Topologically, residues 1 to 43 (MNSTHHHGMYTSLHLWNRSSHGLHGNASESLGKGHSDGGCYEQ) are extracellular. 3 N-linked (GlcNAc...) asparagine glycosylation sites follow: N2, N17, and N26. 2 cysteine pairs are disulfide-bonded: C40/C279 and C271/C277. Residues 44-69 (LFVSPEVFVTLGVISLLENILVIVAI) form a helical membrane-spanning segment. The Cytoplasmic portion of the chain corresponds to 70 to 81 (AKNKNLHSPMYF). Residues 82-106 (FICSLAVADMLVSVSNGSETIVITL) traverse the membrane as a helical segment. Ca(2+)-binding residues include E100, D122, and D126. Residues 107-123 (LNSTDTDAQSFTVNIDN) are Extracellular-facing. A helical transmembrane segment spans residues 124–145 (VIDSVICSSLLASICSLLSIAV). Residues 146-165 (DRYFTIFYALQYHNIMTVRR) are Cytoplasmic-facing. A helical transmembrane segment spans residues 166-186 (VGIIISCIWAACTVSGVLFII). At 187–191 (YSDSS) the chain is on the extracellular side. The helical transmembrane segment at 192–215 (AVIICLITMFFTMLVLMASLYVHM) threads the bilayer. The Cytoplasmic portion of the chain corresponds to 216-248 (FLMARLHIKRIAVLPGTGTIRQGANMKGAITLT). The chain crosses the membrane as a helical span at residues 249-271 (ILIGVFVVCWAPFFLHLLFYISC). Topologically, residues 272-280 (PQNPYCVCF) are extracellular. The helical transmembrane segment at 281–304 (MSHFNLYLILIMCNAVIDPLIYAL) threads the bilayer. Topologically, residues 305–332 (RSQELRKTFKEIICFYPLGGICELPGRY) are cytoplasmic. C318 is lipidated: S-palmitoyl cysteine.

The protein belongs to the G-protein coupled receptor 1 family. In terms of assembly, homodimer; disulfide-linked, also forms higher order oligomers. Interacts with GNAS. Interacts with ATRNL1. Interacts with MGRN1; this interaction competes with GNAS-binding and thus inhibits agonist-induced cAMP production. Interacts with MRAP and MRAP2; these associated factors increase ligand-sensitivity and generation of cAMP. As to expression, brain, enriched in the striatum, nucleus accumbens, and periaqueductal gray.

It is found in the cell membrane. In terms of biological role, hormone receptor that acts as a key component of the leptin-melanocortin pathway at the intersection of homeostatic maintenance of energetic state. Plays a role in regulating food intake: activation by a stimulating hormone such as anorexigenic alpha-melanocyte stimulating hormone (alpha-MSH) inhibits appetite, whereas binding to a natural antagonist like Agouti-related protein/AGRP promotes appetite. G-protein-coupled receptor that activates conventional Galphas signaling leading to induction of anorexogenic signaling in the hypothalamus to result in negative energy balance. Regulates the firing activity of neurons from the hypothalamus by alpha-MSH and AGRP independently of Galphas signaling by ligand-induced coupling of closure of inwardly rectifying potassium channel KCNJ13. In intestinal epithelial cells, plays a role in the inhibition of hepatic glucose production via nesfatin-1/NUCB2 leading to increased cyclic adenosine monophosphate (cAMP) levels and glucagon-like peptide 1 (GLP-1) secretion in the intestinal epithelium. In Rattus norvegicus (Rat), this protein is Melanocortin receptor 4 (Mc4r).